The chain runs to 326 residues: JNK1/MAPK8-associated membrane protein homolog (326 aa).

At 1–71 the chain is on the lumenal side; the sequence is MSSLSGHAST…CESCDTPLQP (71 aa). Asparagine 27 carries N-linked (GlcNAc...) asparagine glycosylation. The helical transmembrane segment at 72–92 threads the bilayer; it reads YDWMYLLFIALLPLLLHMQFI. At 93 to 108 the chain is on the cytoplasmic side; sequence RIARKYCRTRYYEVSE. Residues 109–129 traverse the membrane as a helical segment; it reads YLCVILENVIACVIAVLIYPP. Topologically, residues 130-166 are lumenal; that stretch reads RFTFFLNGCSKTDIKEWYPACYNPRIGYTKTMRCTYE. The chain crosses the membrane as a helical span at residues 167-187; sequence VVFPLYSITFIHHLILIGSIL. Residues 188–208 are Cytoplasmic-facing; it reads VLRSTLYCVLLYKTYNGKPFY. 2 helical membrane-spanning segments follow: residues 209–229 and 230–250; these read AAIV…GVVF and YTFP…HLAL. Topologically, residues 251-269 are cytoplasmic; the sequence is EGKRPLKEMIVRIATSPTH. The helical transmembrane segment at 270–290 threads the bilayer; sequence LIFLSITMLMLSFGVIAIIAP. Residues 291-296 lie on the Lumenal side of the membrane; it reads LDIPYR. Residues 297 to 317 form a helical membrane-spanning segment; that stretch reads WSFLCIVPVPFIFYMATIPFS. Residues 318–326 lie on the Cytoplasmic side of the membrane; that stretch reads NPTTTMRLS.

Its subcellular location is the endoplasmic reticulum membrane. Functionally, facilitates degradation of misfolded endoplasmic reticulum (ER) proteins through the recruitment of components of the proteasome and endoplasmic reticulum-associated degradation (ERAD) system. Involved in ER stress response. The sequence is that of JNK1/MAPK8-associated membrane protein homolog from Caenorhabditis elegans.